Here is a 282-residue protein sequence, read N- to C-terminus: 4-hydroxy-tetrahydrodipicolinate reductase (282 aa).

NAD(+) contacts are provided by residues 14–19 and 115–117; these read GAMGRM and GTT. H171 functions as the Proton donor/acceptor in the catalytic mechanism. H172 contributes to the (S)-2,3,4,5-tetrahydrodipicolinate binding site. The Proton donor role is filled by K175. (S)-2,3,4,5-tetrahydrodipicolinate is bound at residue 181–182; it reads GT.

This sequence belongs to the DapB family.

It is found in the cytoplasm. The catalysed reaction is (S)-2,3,4,5-tetrahydrodipicolinate + NAD(+) + H2O = (2S,4S)-4-hydroxy-2,3,4,5-tetrahydrodipicolinate + NADH + H(+). The enzyme catalyses (S)-2,3,4,5-tetrahydrodipicolinate + NADP(+) + H2O = (2S,4S)-4-hydroxy-2,3,4,5-tetrahydrodipicolinate + NADPH + H(+). The protein operates within amino-acid biosynthesis; L-lysine biosynthesis via DAP pathway; (S)-tetrahydrodipicolinate from L-aspartate: step 4/4. Its function is as follows. Catalyzes the conversion of 4-hydroxy-tetrahydrodipicolinate (HTPA) to tetrahydrodipicolinate. The sequence is that of 4-hydroxy-tetrahydrodipicolinate reductase from Prochlorococcus marinus (strain NATL2A).